Reading from the N-terminus, the 153-residue chain is Ribosome maturation factor RimP (153 aa).

This sequence belongs to the RimP family.

It is found in the cytoplasm. Functionally, required for maturation of 30S ribosomal subunits. The chain is Ribosome maturation factor RimP from Clostridium botulinum (strain ATCC 19397 / Type A).